The following is a 542-amino-acid chain: Phosphoenolpyruvate carboxykinase (ATP) (542 aa).

Substrate-binding residues include arginine 67, tyrosine 208, and lysine 214. ATP-binding positions include lysine 214, histidine 233, and 249-257; that span reads GLSGTGKTT. The Mn(2+) site is built by lysine 214 and histidine 233. Aspartate 270 lines the Mn(2+) pocket. Residues glutamate 298, arginine 334, 450-451, and threonine 456 contribute to the ATP site; that span reads RI. Arginine 334 contributes to the substrate binding site.

This sequence belongs to the phosphoenolpyruvate carboxykinase (ATP) family. As to quaternary structure, monomer. Mn(2+) serves as cofactor.

Its subcellular location is the cytoplasm. The catalysed reaction is oxaloacetate + ATP = phosphoenolpyruvate + ADP + CO2. It functions in the pathway carbohydrate biosynthesis; gluconeogenesis. In terms of biological role, involved in the gluconeogenesis. Catalyzes the conversion of oxaloacetate (OAA) to phosphoenolpyruvate (PEP) through direct phosphoryl transfer between the nucleoside triphosphate and OAA. In Vibrio cholerae serotype O1 (strain ATCC 39541 / Classical Ogawa 395 / O395), this protein is Phosphoenolpyruvate carboxykinase (ATP).